A 310-amino-acid chain; its full sequence is MKITTKVLIIGSGPAGLSAAIYTARAALKPILINGMQPGGQLTITTDVENYPGFAETVQGPWLMEQMSMQAKNVGTEIISDYVEKVDLSKRPFKVFTGAGNEYEAESIIICTGAEAKWLSIASEQEFRGFGVSACATCDGFFFKNQEIVVVGGGNSAVEEALYLTNHASKVTITHRRDSFRAEKILQDRLFKNPKISVIWDHVVDEIVGSDKPKSVTGVKIQNVHTKEISLVNCSGVFIAIGHAPNTGLFTGQIAMDDDNYIITKSGTTKTSVEGVFAAGDVQDKIYRQAVTAAGSGCMAALEVEKFLNK.

34–41 (NGMQPGGQ) contacts FAD. A disulfide bridge connects residues Cys135 and Cys138. 281–290 (DVQDKIYRQA) is a binding site for FAD.

It belongs to the class-II pyridine nucleotide-disulfide oxidoreductase family. In terms of assembly, homodimer. It depends on FAD as a cofactor.

The protein localises to the cytoplasm. The catalysed reaction is [thioredoxin]-dithiol + NADP(+) = [thioredoxin]-disulfide + NADPH + H(+). The chain is Thioredoxin reductase (trxB) from Rickettsia felis (strain ATCC VR-1525 / URRWXCal2) (Rickettsia azadi).